The primary structure comprises 97 residues: Insertion element IS2 uncharacterized 11.1 kDa protein (97 aa).

In Escherichia coli, this protein is Insertion element IS2 uncharacterized 11.1 kDa protein.